The primary structure comprises 1068 residues: MPKRTDINTILIIGAGPIVIGQACEFDYSGAQACKALREEGYKVVLVNSNPATIMTDPDMADVTYIEPIEWRTVEKIIEKERPDAILPTMGGQTALNCALDLSKNGVLKKYNVELIGAKEDAIDKAEDRGRFKEAMEKIGLSTPKSFVCHTLEEAWAAQSEVGFPTLIRPSFTMGGSGGGIAYNKDEFYAICERGFDASPTHELLIEQSVLGWKEYEMEVVRDKADNCIIVCSIENFDPMGVHTGDSITVAPAQTLTDKEYQIMRNASIAVLREIGVDTGGSNVQFAINPENGEMIVIEMNPRVSRSSALASKATGFPIAKVAAKLAVGYTLNELRNDITGGLIPASFEPSIDYVVTKVPRFAFEKFPQADDRLTTQMKSVGEVMAMGRTFQESLQKALRGLETGICGFNLMSEEPEKIRQELGNPGPIRILYVADAFGAGFTLDEVHHYSKIDPWFLIQIQDLVLEELALEKRTLDDLDYAELRRLKRKGFSDKRIAQLTKSAESAVRNKRVSLNLHPVYKRVDTCAGEFTSDTAYLYSTYEEECESRPSDKKKIMILGGGPNRIGQGIEFDYCCVHASLALREAGFETIMVNCNPETVSTDFDTSDRLYFEPLTLEDVLEIIHVEKPHGVIVHYGGQTPLKLANDLHANGVNIIGTSADSIDAAEDRERFQQILHKLHLKQPTNRTARNAEEAVKLAEEVGYPLVVRPSYVLGGRAMQIVYNVDELQRYMREAVSVSNDSPILLDHFLNNAIEVDVDCICDGAEVVIGGIMQHIEQAGIHSGDSACSLPPYSLSQEVQDEIRRQTAEMAFALGVKGLMNVQFAVQDGVIYVLEVNPRASRTVPFVSKATGRPLAKIAARVMAGESLKAQGIQGEVIPPFYSVKEAVFPFIKFPGVDTVLGPEMRSTGEVMGVGTTFAEAFLKAQLGANERIPKTGKVFLSVNDADKPRLLPIARQLQESGYGLCATLGTAKFLREHGVAVQIINKVREGRPNIVDAIKNGEIAMVINTVSGLAETVTDGHAIRRSALQQKVFLQTTLAGAEALAGSVEYLADSEVYSLQDLHQRLL.

The segment at methionine 1–glutamate 403 is carboxyphosphate synthetic domain. Arginine 129, arginine 169, glycine 175, glycine 176, glutamine 208, valine 210, glutamate 215, glycine 241, valine 242, histidine 243, glutamine 285, and glutamate 299 together coordinate ATP. The ATP-grasp 1 domain occupies lysine 133–valine 328. Residues glutamine 285, glutamate 299, and asparagine 301 each contribute to the Mg(2+) site. Mn(2+) contacts are provided by glutamine 285, glutamate 299, and asparagine 301. An oligomerization domain region spans residues threonine 404 to serine 548. A carbamoyl phosphate synthetic domain region spans residues arginine 549 to asparagine 930. In terms of domain architecture, ATP-grasp 2 spans glutamine 673–alanine 864. ATP-binding residues include arginine 709, histidine 748, leucine 750, glutamate 755, glycine 780, isoleucine 781, histidine 782, serine 783, glutamine 823, and glutamate 835. Positions 823, 835, and 837 each coordinate Mg(2+). Positions 823, 835, and 837 each coordinate Mn(2+). The MGS-like domain maps to glutamate 931 to leucine 1068. The allosteric domain stretch occupies residues glutamate 931 to leucine 1068.

Belongs to the CarB family. Composed of two chains; the small (or glutamine) chain promotes the hydrolysis of glutamine to ammonia, which is used by the large (or ammonia) chain to synthesize carbamoyl phosphate. Tetramer of heterodimers (alpha,beta)4. It depends on Mg(2+) as a cofactor. The cofactor is Mn(2+).

The enzyme catalyses hydrogencarbonate + L-glutamine + 2 ATP + H2O = carbamoyl phosphate + L-glutamate + 2 ADP + phosphate + 2 H(+). It carries out the reaction hydrogencarbonate + NH4(+) + 2 ATP = carbamoyl phosphate + 2 ADP + phosphate + 2 H(+). The protein operates within amino-acid biosynthesis; L-arginine biosynthesis; carbamoyl phosphate from bicarbonate: step 1/1. It participates in pyrimidine metabolism; UMP biosynthesis via de novo pathway; (S)-dihydroorotate from bicarbonate: step 1/3. Its function is as follows. Large subunit of the glutamine-dependent carbamoyl phosphate synthetase (CPSase). CPSase catalyzes the formation of carbamoyl phosphate from the ammonia moiety of glutamine, carbonate, and phosphate donated by ATP, constituting the first step of 2 biosynthetic pathways, one leading to arginine and/or urea and the other to pyrimidine nucleotides. The large subunit (synthetase) binds the substrates ammonia (free or transferred from glutamine from the small subunit), hydrogencarbonate and ATP and carries out an ATP-coupled ligase reaction, activating hydrogencarbonate by forming carboxy phosphate which reacts with ammonia to form carbamoyl phosphate. The polypeptide is Carbamoyl phosphate synthase large chain (Pasteurella multocida (strain Pm70)).